A 670-amino-acid polypeptide reads, in one-letter code: Glycine--tRNA ligase beta subunit (670 aa).

This sequence belongs to the class-II aminoacyl-tRNA synthetase family. In terms of assembly, tetramer of two alpha and two beta subunits.

Its subcellular location is the cytoplasm. The catalysed reaction is tRNA(Gly) + glycine + ATP = glycyl-tRNA(Gly) + AMP + diphosphate. The sequence is that of Glycine--tRNA ligase beta subunit from Thermotoga neapolitana (strain ATCC 49049 / DSM 4359 / NBRC 107923 / NS-E).